We begin with the raw amino-acid sequence, 512 residues long: Amidase 2 (512 aa).

Residues lysine 122 and serine 197 each act as charge relay system in the active site. Substrate is bound by residues serine 197 and 218–221 (IGGS). The active-site Acyl-ester intermediate is serine 221.

This sequence belongs to the amidase family.

The enzyme catalyses a monocarboxylic acid amide + H2O = a monocarboxylate + NH4(+). Its pathway is xenobiotic degradation. Functionally, amidase; part of the Fusarium detoxification of benzoxazolinone cluster 2 (FDB2) involved in the degradation of benzoxazolinones produced by the host plant. Maize, wheat, and rye produce the 2 benzoxazinone phytoanticipins 2,4-dihy-droxy-7-methoxy-1,4-benzoxazin-3-one (DIMBOA) and 2,4-dihydroxy-1,4-benzoxazin-3-one (DIBOA) that, due to their inherent instability once released, spontaneously degrade to the more stable corresponding benzoxazolinones, 6-methoxy-2-benzoxazolinone (MBOA) and 2-benzoxazolinone (BOA), respectively. The first step in the detoxification of benzoxazolinones involves the hydrolysis of the cyclic ester bond of benzoxazolinones by the FDB1 cluster gamma-lactamase MBL1 to aminophenols. MBL1 is able to convert BOA into 2-aminophenol (2-AP), as well as MBOA into 5-methoxy-2-aminophenol (2-AMP). The FDB2 cluster N-malonyltransferase FDB2/NAT1 then metabolizes aminophenols via N-malonylation to non-toxic malonamic acids. FDB2/NAT1 converts 2-AP into N-(2-hydroxyphenyl) malonamic acid (HPMA) and 2-AMP into N-(2-hydroxy-4-methoxyphenyl) malonamic acid (HMPMA). The duplicated dienlactone hydrolases DLH1 and DLH2 may provide redundant function for hydrolyzing the lactone moiety in the BOA molecule. The roles of the amidases an other enzymes encoded by the 2 FDB clusters have not been identified so far. The protein is Amidase 2 of Gibberella moniliformis (strain M3125 / FGSC 7600) (Maize ear and stalk rot fungus).